Reading from the N-terminus, the 495-residue chain is Probable aspartic-type endopeptidase OPSB (495 aa).

The signal sequence occupies residues 1–19 (MRGDSFIWSLATAIPLLST). In terms of domain architecture, Peptidase A1 spans 73-408 (YFCNLTLGTP…DLDNNEISIA (336 aa)). The N-linked (GlcNAc...) asparagine glycan is linked to Asn-76. Residue Asp-91 is part of the active site. Asn-136 carries an N-linked (GlcNAc...) asparagine glycan. The active site involves Asp-290. The N-linked (GlcNAc...) asparagine glycan is linked to Asn-413. The interval 447–470 (ATGLPGVETGVPGSRPPSSKAAGQ) is disordered. Residue Ala-467 is the site of GPI-anchor amidated alanine attachment. The propeptide at 468–495 (AGQAKRPDFVLGVAAVGLAGAGMLFAAM) is removed in mature form.

It belongs to the peptidase A1 family.

Its subcellular location is the cell membrane. Its function is as follows. Probable GPI-anchored aspartic-type endopeptidase which contributes to virulence. This Arthroderma benhamiae (strain ATCC MYA-4681 / CBS 112371) (Trichophyton mentagrophytes) protein is Probable aspartic-type endopeptidase OPSB (OPSB).